The sequence spans 355 residues: Fructose-bisphosphate aldolase, cytoplasmic isozyme (355 aa).

Residues Arg-52 and Lys-142 each contribute to the substrate site. Glu-183 functions as the Proton acceptor in the catalytic mechanism. Lys-225 serves as the catalytic Schiff-base intermediate with dihydroxyacetone-P.

Belongs to the class I fructose-bisphosphate aldolase family.

It is found in the cytoplasm. The catalysed reaction is beta-D-fructose 1,6-bisphosphate = D-glyceraldehyde 3-phosphate + dihydroxyacetone phosphate. The protein operates within carbohydrate degradation; glycolysis; D-glyceraldehyde 3-phosphate and glycerone phosphate from D-glucose: step 4/4. In Zea mays (Maize), this protein is Fructose-bisphosphate aldolase, cytoplasmic isozyme.